The chain runs to 105 residues: Large ribosomal subunit protein uL24 (105 aa).

The protein belongs to the universal ribosomal protein uL24 family. In terms of assembly, part of the 50S ribosomal subunit.

Functionally, one of two assembly initiator proteins, it binds directly to the 5'-end of the 23S rRNA, where it nucleates assembly of the 50S subunit. In terms of biological role, one of the proteins that surrounds the polypeptide exit tunnel on the outside of the subunit. This is Large ribosomal subunit protein uL24 from Thermotoga petrophila (strain ATCC BAA-488 / DSM 13995 / JCM 10881 / RKU-1).